The primary structure comprises 398 residues: uncharacterized protein (398 aa).

It belongs to the class-V pyridoxal-phosphate-dependent aminotransferase family. As to quaternary structure, homodimer.

Functionally, is essential for optimal growth. This is an uncharacterized protein from Mycobacterium tuberculosis (strain CDC 1551 / Oshkosh).